The following is a 395-amino-acid chain: Bifunctional enzyme IspD/IspF (395 aa).

The interval Met-1–Pro-237 is 2-C-methyl-D-erythritol 4-phosphate cytidylyltransferase. The segment at Cys-238–Pro-395 is 2-C-methyl-D-erythritol 2,4-cyclodiphosphate synthase. Residues Asp-244 and His-246 each contribute to the a divalent metal cation site. 4-CDP-2-C-methyl-D-erythritol 2-phosphate-binding positions include Asp-244–His-246 and His-270–Ser-271. His-278 is an a divalent metal cation binding site. Residues Asp-292 to Gly-294, Phe-297 to Asp-301, Thr-368 to Glu-371, and Phe-375 contribute to the 4-CDP-2-C-methyl-D-erythritol 2-phosphate site.

This sequence in the N-terminal section; belongs to the IspD/TarI cytidylyltransferase family. IspD subfamily. In the C-terminal section; belongs to the IspF family. It depends on a divalent metal cation as a cofactor.

The enzyme catalyses 2-C-methyl-D-erythritol 4-phosphate + CTP + H(+) = 4-CDP-2-C-methyl-D-erythritol + diphosphate. The catalysed reaction is 4-CDP-2-C-methyl-D-erythritol 2-phosphate = 2-C-methyl-D-erythritol 2,4-cyclic diphosphate + CMP. It participates in isoprenoid biosynthesis; isopentenyl diphosphate biosynthesis via DXP pathway; isopentenyl diphosphate from 1-deoxy-D-xylulose 5-phosphate: step 2/6. Its pathway is isoprenoid biosynthesis; isopentenyl diphosphate biosynthesis via DXP pathway; isopentenyl diphosphate from 1-deoxy-D-xylulose 5-phosphate: step 4/6. Bifunctional enzyme that catalyzes the formation of 4-diphosphocytidyl-2-C-methyl-D-erythritol from CTP and 2-C-methyl-D-erythritol 4-phosphate (MEP) (IspD), and catalyzes the conversion of 4-diphosphocytidyl-2-C-methyl-D-erythritol 2-phosphate (CDP-ME2P) to 2-C-methyl-D-erythritol 2,4-cyclodiphosphate (ME-CPP) with a corresponding release of cytidine 5-monophosphate (CMP) (IspF). The polypeptide is Bifunctional enzyme IspD/IspF (Nitratidesulfovibrio vulgaris (strain ATCC 29579 / DSM 644 / CCUG 34227 / NCIMB 8303 / VKM B-1760 / Hildenborough) (Desulfovibrio vulgaris)).